We begin with the raw amino-acid sequence, 115 residues long: Ribonuclease P protein component (115 aa).

It belongs to the RnpA family. In terms of assembly, consists of a catalytic RNA component (M1 or rnpB) and a protein subunit.

It catalyses the reaction Endonucleolytic cleavage of RNA, removing 5'-extranucleotides from tRNA precursor.. Functionally, RNaseP catalyzes the removal of the 5'-leader sequence from pre-tRNA to produce the mature 5'-terminus. It can also cleave other RNA substrates such as 4.5S RNA. The protein component plays an auxiliary but essential role in vivo by binding to the 5'-leader sequence and broadening the substrate specificity of the ribozyme. In Staphylococcus epidermidis (strain ATCC 35984 / DSM 28319 / BCRC 17069 / CCUG 31568 / BM 3577 / RP62A), this protein is Ribonuclease P protein component.